A 200-amino-acid chain; its full sequence is Recombination protein RecR (200 aa).

Residues Cys57–Cys72 form a C4-type zinc finger. The Toprim domain maps to Gly81–Pro176.

The protein belongs to the RecR family.

Its function is as follows. May play a role in DNA repair. It seems to be involved in an RecBC-independent recombinational process of DNA repair. It may act with RecF and RecO. The sequence is that of Recombination protein RecR from Aeromonas hydrophila subsp. hydrophila (strain ATCC 7966 / DSM 30187 / BCRC 13018 / CCUG 14551 / JCM 1027 / KCTC 2358 / NCIMB 9240 / NCTC 8049).